Consider the following 280-residue polypeptide: Urease accessory protein UreD 1 (280 aa).

This sequence belongs to the UreD family. UreD, UreF and UreG form a complex that acts as a GTP-hydrolysis-dependent molecular chaperone, activating the urease apoprotein by helping to assemble the nickel containing metallocenter of UreC. The UreE protein probably delivers the nickel.

Its subcellular location is the cytoplasm. Functionally, required for maturation of urease via the functional incorporation of the urease nickel metallocenter. The protein is Urease accessory protein UreD 1 of Brucella melitensis biotype 1 (strain ATCC 23456 / CCUG 17765 / NCTC 10094 / 16M).